The chain runs to 236 residues: Small ribosomal subunit protein uS2c (236 aa).

This sequence belongs to the universal ribosomal protein uS2 family.

It is found in the plastid. It localises to the chloroplast. The protein is Small ribosomal subunit protein uS2c (rps2) of Lactuca sativa (Garden lettuce).